The following is a 235-amino-acid chain: Sugar fermentation stimulation protein homolog (235 aa).

This sequence belongs to the SfsA family.

The protein is Sugar fermentation stimulation protein homolog of Roseobacter denitrificans (strain ATCC 33942 / OCh 114) (Erythrobacter sp. (strain OCh 114)).